A 359-amino-acid polypeptide reads, in one-letter code: Src kinase-associated phosphoprotein 2 (359 aa).

Residues S5, S6, and S9 each carry the phosphoserine modification. The tract at residues 14 to 64 is homodimerization; sequence PEEIRNLLADVETFVADILKGENLSKKAKEKRESLIKKIKDVKSIYLQEFQ. The tract at residues 66-88 is disordered; that stretch reads KGDAEDGEEYDDPFAGPPDTISL. Phosphotyrosine is present on Y75. A phosphoserine mark is found at S87 and S90. One can recognise a PH domain in the interval 116–219; it reads FVLKAGYLEK…WVQQLKFVLQ (104 aa). Phosphotyrosine occurs at positions 151 and 197. S223 is subject to Phosphoserine. Y261 carries the post-translational modification Phosphotyrosine. Residues 264 to 293 are disordered; sequence LPEEEEDSAPVKVEEQRKMSQDSVHHTSGD. Basic and acidic residues predominate over residues 275 to 293; it reads KVEEQRKMSQDSVHHTSGD. Residues S283 and S286 each carry the phosphoserine modification. The region spanning 297 to 358 is the SH3 domain; sequence DYANFYQGLW…PKAYIMEMYD (62 aa).

It belongs to the SKAP family. Homodimer. Interacts with PTPNS1. Part of a complex consisting of SKAP2, FYB1 and PTPNS1. Part of a complex consisting of SKAP2, FYB1 and LILRB3. May interact with actin. Interacts with FYB1, which is required for SKAP2 protein stability. Interacts with LAT, GRB2, PTK2B and PRAM1. May interact with FYN, HCK and LYN. Interacts with FASLG. In terms of processing, phosphorylated in resting platelets. Phosphorylated by FYN on Tyr-261 upon T-cell activation. Dephosphorylated on Tyr-75 by PTPN22. In terms of tissue distribution, ubiquitously expressed. Present in platelets (at protein level).

Its subcellular location is the cytoplasm. Its function is as follows. May be involved in B-cell and macrophage adhesion processes. In B-cells, may act by coupling the B-cell receptor (BCR) to integrin activation. May play a role in src signaling pathway. This Homo sapiens (Human) protein is Src kinase-associated phosphoprotein 2 (SKAP2).